Here is a 592-residue protein sequence, read N- to C-terminus: Coronatine-insensitive protein 1 (592 aa).

The 42-residue stretch at 16 to 57 folds into the F-box domain; the sequence is TVDDVIEQVMTYITDPKDRDSASLVCRRWFKIDSETREHVTM. LRR repeat units follow at residues 58–82, 83–102, 103–120, 121–154, 155–182, 183–210, 211–236, 237–264, 265–283, 284–308, 309–332, 333–368, 369–393, 394–426, 427–456, 457–478, 479–500, and 501–524; these read ALCY…KLKG, KPRA…YVTP, WVTE…VHFR, RMIV…FTTD, GLLS…KDGK, WLHE…ISPK, DLET…LELV, GFFK…EKYM, NLVF…MGPN, EMPI…LETE, DHCT…IGDR, GLEV…VSQR, GLIA…ITNE, SLES…PLDN, GVRS…LGLS, YIGQ…ESDE, GLME…GCCF, and SERA…QGYR. A jasmonate-binding site is contributed by Arg-85. Residues Arg-348, Tyr-386, and Arg-409 each coordinate jasmonate. Jasmonate is bound at residue Arg-496.

Component of SCF(COI1) E3 ubiquitin ligase complexes at least composed of ASK1 or ASK2, CUL1, RBX1A or RBX1B and COI1. Interacts with ASK1 and ASK2, but separately. Also binds to ASK11 and ASK12. Interacts with RBCS-1B and HDA6. SCF complexes interact with the COP9 signalosome (CSN). Interacts with TIFY10A.

It participates in protein modification; protein ubiquitination. Required for jasmonate-regulated plant fertility and defense processes, and for coronatine and/or other elicitors perceptions/responses. Seems to not be required for meiosis. Required for the regulation of some genes induced by wounding, but not for all. Component of SCF(COI1) E3 ubiquitin ligase complexes, which may mediate the ubiquitination and subsequent proteasomal degradation of target proteins (probably including the ribulose bisphosphate carboxylase small chain 1B RBCS-1B and the histone deacetylase HDA6). These SCF complexes play crucial roles in regulating response to jasmonate, and their interactions with the COP9 signalosome (CSN) appear to be important for their activity. Interacts with TIFY10A and inositol pentakisphosphate to form a high-affinity jasmonates coreceptor. Involved in the regulation of plant gene expression during plant-pathogen interactions with Pseudomonas syringae and Alternaria brassicicola. In Arabidopsis thaliana (Mouse-ear cress), this protein is Coronatine-insensitive protein 1 (COI1).